The following is an 819-amino-acid chain: Transferrin 2 (819 aa).

An N-terminal signal peptide occupies residues 1–21; it reads MASSLVFVALVGALCFTLANA. Residues 33-373 enclose the Transferrin-like 1 domain; that stretch reads MVWCTKSQAE…QYDQYRSERL (341 aa). 2 disulfides stabilise this stretch: Cys36/Cys78 and Cys46/Cys69. N-linked (GlcNAc...) asparagine glycosylation is found at Asn48 and Asn66. The Fe(3+) site is built by Asp93 and Tyr121. Disulfide bonds link Cys147–Cys237, Cys190–Cys213, and Cys273–Cys287. Hydrogencarbonate is bound by residues Ala155 and Gly156. A glycan (N-linked (GlcNAc...) asparagine) is linked at Asn187. Tyr231 contributes to the Fe(3+) binding site. A disordered region spans residues 325–361; that stretch reads GTRDDQSRQGGQSFNSRNNINDQNAYGQFDNNDPYRT. Polar residues predominate over residues 332-361; the sequence is RQGGQSFNSRNNINDQNAYGQFDNNDPYRT. Asn388 carries an N-linked (GlcNAc...) asparagine glycan. Residues 450-796 form the Transferrin-like 2 domain; the sequence is MTLCVTSENE…FMRARRITDC (347 aa). Disulfide bonds link Cys453–Cys490 and Cys463–Cys481. Asp505 and Tyr533 together coordinate Fe(3+). Intrachain disulfides connect Cys557-Cys646, Cys599-Cys621, Cys618-Cys629, and Cys687-Cys701. The hydrogencarbonate site is built by Thr559, Ala565, and Gly566. N-linked (GlcNAc...) asparagine glycosylation occurs at Asn720. The GPI-anchor amidated cysteine moiety is linked to residue Cys796. A propeptide spans 797–819 (removed in mature form); that stretch reads YAGASQLALSVGLLLVGSLVAML.

The protein belongs to the transferrin family. Forms a complex composed of septa junction proteins Nrx-IV/Nrx, Tsf2/MTf, Cont and Nrg during late embryogenesis.

The protein resides in the apicolateral cell membrane. It is found in the cell junction. It localises to the septate junction. In terms of biological role, iron-binding protein and component of septate junctions that form the paracellular permeability barrier in epithelial tissues. In an iron-dependent manner, required for septate junction assembly during epithelial maturation in embryos and mature septa junctions stability. This Drosophila melanogaster (Fruit fly) protein is Transferrin 2.